The following is a 522-amino-acid chain: Peptide chain release factor 3 (522 aa).

A tr-type G domain is found at 10–277 (ASRKTFAIIS…TFVDFAPSPS (268 aa)). GTP-binding positions include 19–26 (SHPDAGKT), 87–91 (DTPGH), and 141–144 (NKMD).

It belongs to the TRAFAC class translation factor GTPase superfamily. Classic translation factor GTPase family. PrfC subfamily.

It is found in the cytoplasm. Increases the formation of ribosomal termination complexes and stimulates activities of RF-1 and RF-2. It binds guanine nucleotides and has strong preference for UGA stop codons. It may interact directly with the ribosome. The stimulation of RF-1 and RF-2 is significantly reduced by GTP and GDP, but not by GMP. This Listeria innocua serovar 6a (strain ATCC BAA-680 / CLIP 11262) protein is Peptide chain release factor 3.